Consider the following 664-residue polypeptide: Macoilin (664 aa).

4 helical membrane-spanning segments follow: residues 28-48 (TFLY…DFVV), 75-95 (AFSV…LLFI), 120-140 (VCLP…AIRF), and 154-174 (FAAH…KSYV). The segment covering 253-265 (REKGKEKDKDAKK) has biased composition (basic and acidic residues). The disordered stretch occupies residues 253–274 (REKGKEKDKDAKKHNLGINNNN). Ser-305 is modified (phosphoserine). The segment covering 320–348 (KNYKNASGVVNSSPRSHSATNGSIPSSSS) has biased composition (polar residues). The disordered stretch occupies residues 320 to 375 (KNYKNASGVVNSSPRSHSATNGSIPSSSSKNEKKQKCTSKSPSTHKDLMENCIPNN). A glycan (N-linked (GlcNAc...) asparagine) is linked at Asn-324. Ser-332 is subject to Phosphoserine. 2 N-linked (GlcNAc...) asparagine glycosylation sites follow: Asn-340 and Asn-452. The disordered stretch occupies residues 630-664 (TSPLSPVSPHYSSKFVETSPSGLDPNASVYQPLKK). 2 positions are modified to phosphoserine: Ser-631 and Ser-634. N-linked (GlcNAc...) asparagine glycosylation occurs at Asn-655.

This sequence belongs to the macoilin family.

It is found in the rough endoplasmic reticulum membrane. The protein resides in the nucleus membrane. Plays a role in the regulation of neuronal activity. The protein is Macoilin (MACO1) of Pan troglodytes (Chimpanzee).